The primary structure comprises 149 residues: NPC intracellular cholesterol transporter 2 (149 aa).

The signal sequence occupies residues 1 to 19 (MHFLAAAFLLLTLSASALA). Disulfide bonds link Cys27–Cys140, Cys42–Cys47, and Cys93–Cys99. A glycan (N-linked (GlcNAc...) asparagine) is linked at Asn58. Lys116 bears the N6-acetyllysine mark.

Belongs to the NPC2 family. Interacts with NPC1 (via the second lumenal domain) in a cholestrol-dependent manner. Interacts with NUS1/NgBR, the interaction stabilizes NCP2 and regulates cholesterol trafficking. Interacts with DHDDS. Interacts with NEDD4L (via C2 domain). Interacts with NPC1L1. In terms of processing, N-glycosylated. Found in the epididymal fluid as a 19 kDa glycoprotein that is processed during its passage through the epididymis into a 16 kDa protein. In terms of tissue distribution, found in the fluid from the distal caput to cauda epididymis, not detected in the rete testis and the proximal and middle caput epididymal fluids (at protein level).

The protein localises to the secreted. The protein resides in the endoplasmic reticulum. It is found in the lysosome. The enzyme catalyses cholesterol(in) = cholesterol(out). Intracellular cholesterol transporter which acts in concert with NPC1 and plays an important role in the egress of cholesterol from the lysosomal compartment. Unesterified cholesterol that has been released from LDLs in the lumen of the late endosomes/lysosomes is transferred by NPC2 to the cholesterol-binding pocket in the N-terminal domain of NPC1. May bind and mobilize cholesterol that is associated with membranes. NPC2 binds cholesterol with a 1:1 stoichiometry. Can bind a variety of sterols, including lathosterol, desmosterol and the plant sterols stigmasterol and beta-sitosterol. The secreted form of NCP2 regulates biliary cholesterol secretion via stimulation of ABCG5/ABCG8-mediated cholesterol transport. In Sus scrofa (Pig), this protein is NPC intracellular cholesterol transporter 2.